A 91-amino-acid chain; its full sequence is Putative membrane protein insertion efficiency factor (91 aa).

The protein belongs to the UPF0161 family.

The protein localises to the cell inner membrane. In terms of biological role, could be involved in insertion of integral membrane proteins into the membrane. The protein is Putative membrane protein insertion efficiency factor of Saccharophagus degradans (strain 2-40 / ATCC 43961 / DSM 17024).